The sequence spans 447 residues: Probable glycine dehydrogenase (decarboxylating) subunit 1 (447 aa).

It belongs to the GcvP family. N-terminal subunit subfamily. As to quaternary structure, the glycine cleavage system is composed of four proteins: P, T, L and H. In this organism, the P 'protein' is a heterodimer of two subunits.

It catalyses the reaction N(6)-[(R)-lipoyl]-L-lysyl-[glycine-cleavage complex H protein] + glycine + H(+) = N(6)-[(R)-S(8)-aminomethyldihydrolipoyl]-L-lysyl-[glycine-cleavage complex H protein] + CO2. Its function is as follows. The glycine cleavage system catalyzes the degradation of glycine. The P protein binds the alpha-amino group of glycine through its pyridoxal phosphate cofactor; CO(2) is released and the remaining methylamine moiety is then transferred to the lipoamide cofactor of the H protein. The chain is Probable glycine dehydrogenase (decarboxylating) subunit 1 from Bacillus cereus (strain AH187).